A 207-amino-acid polypeptide reads, in one-letter code: Guanylate kinase (207 aa).

The Guanylate kinase-like domain maps to 4-184 (GTLYIVSAPS…ALSDLKTIIR (181 aa)). 11 to 18 (APSGAGKS) is a binding site for ATP.

This sequence belongs to the guanylate kinase family.

Its subcellular location is the cytoplasm. It carries out the reaction GMP + ATP = GDP + ADP. The enzyme catalyses dZMP + ATP = dZDP + ADP. The protein operates within purine metabolism. Essential for recycling GMP and indirectly, cGMP. Functionally, (Microbial infection) Catalyzes the phosphorylation of dZMP to dZDP, when the bacterium is infected by a phage that produces the substrate for the synthesis of dZTP (2- amino-2'-deoxyadenosine 5'-triphosphate), which is then used by the phage as a DNA polymerase substrate. This chain is Guanylate kinase, found in Salmonella choleraesuis (strain SC-B67).